The chain runs to 320 residues: Apolipoprotein E (320 aa).

An N-terminal signal peptide occupies residues 1 to 18 (MKVLWAAFLVAFLAGCQG). Tandem repeats lie at residues 82–103 (ALMDETMKELKAYKSELEEQLS), 104–125 (PVAEETRARLSKELQAAQARLG), 126–147 (ADMEDVRSRLAQYRSEVQAMLG), 148–169 (QSTDELRARLASHLRKLRKRLL), 170–191 (RDVDDLQKRLAVYQAGAREGAE), 192–213 (RGVSAIRERLGPLVEQGRARAA), 214–236 (TVGSSLASQPLQERAQAWGERLR), and 237–258 (ARMEEVGSRTRDRLDEVKEQVE). Residues 82 to 199 (ALMDETMKEL…AERGVSAIRE (118 aa)) are 8 X 22 AA approximate tandem repeats. Met145 bears the Methionine sulfoxide mark. Position 149 is a phosphoserine (Ser149). The tract at residues 160 to 170 (HLRKLRKRLLR) is LDL and other lipoprotein receptors binding. 164 to 167 (LRKR) contacts heparin. The lipid-binding and lipoprotein association stretch occupies residues 212–293 (AATVGSSLAS…SWFEPLVEDM (82 aa)). Position 232–239 (232–239 (GERLRARM)) interacts with heparin. The tract at residues 269–320 (QQMRLQAEAFQARLKSWFEPLVEDMQRQWAGLVEKVQAAVGASATPVPSDNH) is homooligomerization. The segment at 281–293 (RLKSWFEPLVEDM) is specificity for association with VLDL.

It belongs to the apolipoprotein A1/A4/E family. In terms of assembly, homotetramer. May interact with ABCA1; functionally associated with ABCA1 in the biogenesis of HDLs. May interact with APP/A4 amyloid-beta peptide; the interaction is extremely stable in vitro but its physiological significance is unclear. May interact with MAPT. May interact with MAP2. In the cerebrospinal fluid, interacts with secreted SORL1. Interacts with PMEL; this allows the loading of PMEL luminal fragment on ILVs to induce fibril nucleation. Post-translationally, APOE exists as multiple glycosylated and sialylated glycoforms within cells and in plasma. The extent of glycosylation and sialylation are tissue and context specific. Glycated in plasma VLDL. In terms of processing, phosphorylated by FAM20C in the extracellular medium.

The protein resides in the secreted. The protein localises to the extracellular space. It localises to the extracellular matrix. Its subcellular location is the extracellular vesicle. It is found in the endosome. The protein resides in the multivesicular body. In terms of biological role, APOE is an apolipoprotein, a protein associating with lipid particles, that mainly functions in lipoprotein-mediated lipid transport between organs via the plasma and interstitial fluids. APOE is a core component of plasma lipoproteins and is involved in their production, conversion and clearance. Apolipoproteins are amphipathic molecules that interact both with lipids of the lipoprotein particle core and the aqueous environment of the plasma. As such, APOE associates with chylomicrons, chylomicron remnants, very low density lipoproteins (VLDL) and intermediate density lipoproteins (IDL) but shows a preferential binding to high-density lipoproteins (HDL). It also binds a wide range of cellular receptors including the LDL receptor/LDLR, the LDL receptor-related proteins LRP1, LRP2 and LRP8 and the very low-density lipoprotein receptor/VLDLR that mediate the cellular uptake of the APOE-containing lipoprotein particles. Finally, APOE also has a heparin-binding activity and binds heparan-sulfate proteoglycans on the surface of cells, a property that supports the capture and the receptor-mediated uptake of APOE-containing lipoproteins by cells. A main function of APOE is to mediate lipoprotein clearance through the uptake of chylomicrons, VLDLs, and HDLs by hepatocytes. APOE is also involved in the biosynthesis by the liver of VLDLs as well as their uptake by peripheral tissues ensuring the delivery of triglycerides and energy storage in muscle, heart and adipose tissues. By participating in the lipoprotein-mediated distribution of lipids among tissues, APOE plays a critical role in plasma and tissues lipid homeostasis. APOE is also involved in two steps of reverse cholesterol transport, the HDLs-mediated transport of cholesterol from peripheral tissues to the liver, and thereby plays an important role in cholesterol homeostasis. First, it is functionally associated with ABCA1 in the biogenesis of HDLs in tissues. Second, it is enriched in circulating HDLs and mediates their uptake by hepatocytes. APOE also plays an important role in lipid transport in the central nervous system, regulating neuron survival and sprouting. The sequence is that of Apolipoprotein E (APOE) from Saimiri boliviensis boliviensis (Bolivian squirrel monkey).